Here is a 428-residue protein sequence, read N- to C-terminus: Tubby-like F-box protein 5 (428 aa).

Positions 17 to 65 (IGSMSRRAADGRAGGGRGGSRHSWPVLWSEQQQPPQQQQLQRQEHQQQQ) are disordered. The span at 47 to 65 (QQQPPQQQQLQRQEHQQQQ) shows a compositional bias: low complexity. The F-box domain occupies 65–117 (QGRWANLPPELLLDVIQRVEASEATWPARRQVVACAAVCRSWREVTKEVVKTL).

This sequence belongs to the TUB family. As to expression, ubiquitous.

In Oryza sativa subsp. japonica (Rice), this protein is Tubby-like F-box protein 5 (TULP5).